The sequence spans 186 residues: Phosphopantetheine adenylyltransferase (186 aa).

Threonine 14 contributes to the substrate binding site. ATP-binding positions include 14–15 and histidine 22; that span reads TF. Substrate is bound by residues lysine 46, leucine 78, and arginine 92. ATP is bound by residues 93 to 95, glutamate 103, and 128 to 134; these read GLR and WLYISST.

This sequence belongs to the bacterial CoaD family. Homohexamer. Mg(2+) serves as cofactor.

It localises to the cytoplasm. The catalysed reaction is (R)-4'-phosphopantetheine + ATP + H(+) = 3'-dephospho-CoA + diphosphate. Its pathway is cofactor biosynthesis; coenzyme A biosynthesis; CoA from (R)-pantothenate: step 4/5. Its function is as follows. Reversibly transfers an adenylyl group from ATP to 4'-phosphopantetheine, yielding dephospho-CoA (dPCoA) and pyrophosphate. This is Phosphopantetheine adenylyltransferase from Nitratidesulfovibrio vulgaris (strain ATCC 29579 / DSM 644 / CCUG 34227 / NCIMB 8303 / VKM B-1760 / Hildenborough) (Desulfovibrio vulgaris).